A 238-amino-acid polypeptide reads, in one-letter code: uncharacterized protein (238 aa).

It belongs to the mimivirus L74/L77/R857 family.

This is an uncharacterized protein from Acanthamoeba polyphaga mimivirus (APMV).